Reading from the N-terminus, the 325-residue chain is Pyruvate dehydrogenase E1 component subunit beta (325 aa).

Position 60 (Glu60) interacts with thiamine diphosphate.

As to quaternary structure, heterodimer of an alpha and a beta chain. Thiamine diphosphate serves as cofactor.

It catalyses the reaction N(6)-[(R)-lipoyl]-L-lysyl-[protein] + pyruvate + H(+) = N(6)-[(R)-S(8)-acetyldihydrolipoyl]-L-lysyl-[protein] + CO2. In terms of biological role, the pyruvate dehydrogenase complex catalyzes the overall conversion of pyruvate to acetyl-CoA and CO(2). It contains multiple copies of three enzymatic components: pyruvate dehydrogenase (E1), dihydrolipoamide acetyltransferase (E2) and lipoamide dehydrogenase (E3). This chain is Pyruvate dehydrogenase E1 component subunit beta (pdhB), found in Staphylococcus aureus (strain COL).